The following is a 384-amino-acid chain: Anhydro-N-acetylmuramic acid kinase (384 aa).

9–16 serves as a coordination point for ATP; it reads GTSYDAID.

Belongs to the anhydro-N-acetylmuramic acid kinase family.

It catalyses the reaction 1,6-anhydro-N-acetyl-beta-muramate + ATP + H2O = N-acetyl-D-muramate 6-phosphate + ADP + H(+). The protein operates within amino-sugar metabolism; 1,6-anhydro-N-acetylmuramate degradation. It functions in the pathway cell wall biogenesis; peptidoglycan recycling. Its function is as follows. Catalyzes the specific phosphorylation of 1,6-anhydro-N-acetylmuramic acid (anhMurNAc) with the simultaneous cleavage of the 1,6-anhydro ring, generating MurNAc-6-P. Is required for the utilization of anhMurNAc either imported from the medium or derived from its own cell wall murein, and thus plays a role in cell wall recycling. The protein is Anhydro-N-acetylmuramic acid kinase of Streptomyces avermitilis (strain ATCC 31267 / DSM 46492 / JCM 5070 / NBRC 14893 / NCIMB 12804 / NRRL 8165 / MA-4680).